The sequence spans 448 residues: Protein Z-dependent protease inhibitor (448 aa).

An N-terminal signal peptide occupies residues 1–21; that stretch reads MRVASSLFLPVLLTEVWLVTS. The interval 33–70 is disordered; it reads VHLESQDYENQTWEEYTRTDPREEEEEEEEKEEGKDEE. A compositionally biased stretch (acidic residues) spans 54–63; sequence REEEEEEEEK. An N-linked (GlcNAc...) asparagine glycan is attached at Asn-81. The tract at residues 140–157 is heparin-binding; that stretch reads AGPLILPALFKKVKETFS. Residues Asn-184, Asn-278, and Asn-299 are each glycosylated (N-linked (GlcNAc...) asparagine).

The protein belongs to the serpin family. Phosphorylated by FAM20C in the extracellular medium. Detectable in liver, but not in heart, brain, spleen, lung, kidney, skeletal muscle or testes.

The protein localises to the secreted. Inhibits activity of the coagulation protease factor Xa in the presence of PROZ, calcium and phospholipids. Also inhibits factor XIa in the absence of cofactors. The chain is Protein Z-dependent protease inhibitor (Serpina10) from Mus musculus (Mouse).